A 464-amino-acid polypeptide reads, in one-letter code: tRNA modification GTPase MnmE (464 aa).

(6S)-5-formyl-5,6,7,8-tetrahydrofolate-binding residues include arginine 27, glutamate 90, and lysine 129. In terms of domain architecture, TrmE-type G spans 222–384 (GVTLVLAGSV…LYDKIKTLIS (163 aa)). GTP-binding positions include 232-237 (NAGKSS), 251-257 (SSYPGTT), and 276-279 (DTAG). Mg(2+) is bound by residues serine 236 and threonine 257. Lysine 464 contacts (6S)-5-formyl-5,6,7,8-tetrahydrofolate.

This sequence belongs to the TRAFAC class TrmE-Era-EngA-EngB-Septin-like GTPase superfamily. TrmE GTPase family. Homodimer. Heterotetramer of two MnmE and two MnmG subunits. It depends on K(+) as a cofactor.

It localises to the cytoplasm. Functionally, exhibits a very high intrinsic GTPase hydrolysis rate. Involved in the addition of a carboxymethylaminomethyl (cmnm) group at the wobble position (U34) of certain tRNAs, forming tRNA-cmnm(5)s(2)U34. This Borrelia garinii subsp. bavariensis (strain ATCC BAA-2496 / DSM 23469 / PBi) (Borreliella bavariensis) protein is tRNA modification GTPase MnmE.